Here is a 360-residue protein sequence, read N- to C-terminus: Aminomethyltransferase (360 aa).

Belongs to the GcvT family. In terms of assembly, the glycine cleavage system is composed of four proteins: P, T, L and H.

The catalysed reaction is N(6)-[(R)-S(8)-aminomethyldihydrolipoyl]-L-lysyl-[protein] + (6S)-5,6,7,8-tetrahydrofolate = N(6)-[(R)-dihydrolipoyl]-L-lysyl-[protein] + (6R)-5,10-methylene-5,6,7,8-tetrahydrofolate + NH4(+). Its function is as follows. The glycine cleavage system catalyzes the degradation of glycine. The protein is Aminomethyltransferase of Pseudomonas aeruginosa (strain ATCC 15692 / DSM 22644 / CIP 104116 / JCM 14847 / LMG 12228 / 1C / PRS 101 / PAO1).